The sequence spans 891 residues: Protein SEY1 homolog (891 aa).

The Cytoplasmic portion of the chain corresponds to 1–754 (MNLHLVDSDG…LRAAEAGNQR (754 aa)). The 267-residue stretch at 52-318 (GLNYHVVGVF…RCSDYLFSYH (267 aa)) folds into the GB1/RHD3-type G domain. 62–69 (GGQSSGKS) lines the GTP pocket. The helical transmembrane segment at 755-775 (LPAWVIPALFILGWNELLYVL) threads the bilayer. At 776-778 (TSP) the chain is on the lumenal side. The helical transmembrane segment at 779–799 (ALLVLVVVICAVFFRQFFVSQ) threads the bilayer. Over 800-891 (WHAFEETGPA…MRHRTTHKLD (92 aa)) the chain is Cytoplasmic. The span at 863-880 (STHADPAPSNTTVPTAQA) shows a compositional bias: polar residues. Residues 863–891 (STHADPAPSNTTVPTAQATMRHRTTHKLD) form a disordered region. Basic residues predominate over residues 882–891 (MRHRTTHKLD).

The protein belongs to the TRAFAC class dynamin-like GTPase superfamily. GB1/RHD3 GTPase family. RHD3 subfamily.

It localises to the endoplasmic reticulum membrane. In terms of biological role, probable GTP-binding protein that may be involved in cell development. The sequence is that of Protein SEY1 homolog from Leishmania braziliensis.